Here is a 329-residue protein sequence, read N- to C-terminus: NADH-quinone oxidoreductase subunit H (329 aa).

The next 8 membrane-spanning stretches (helical) occupy residues 9 to 29 (ILKV…LTYV), 79 to 99 (IAPV…PFFP), 117 to 137 (VGIL…LLAG), 162 to 182 (VSGL…LIEI), 188 to 208 (GGIF…FLIA), 243 to 263 (FFIG…LLFF), 269 to 289 (LWFI…LFLF), and 309 to 329 (WKVL…VLIL).

Belongs to the complex I subunit 1 family. NDH-1 is composed of 14 different subunits. Subunits NuoA, H, J, K, L, M, N constitute the membrane sector of the complex.

The protein resides in the cell inner membrane. It carries out the reaction a quinone + NADH + 5 H(+)(in) = a quinol + NAD(+) + 4 H(+)(out). In terms of biological role, NDH-1 shuttles electrons from NADH, via FMN and iron-sulfur (Fe-S) centers, to quinones in the respiratory chain. The immediate electron acceptor for the enzyme in this species is believed to be ubiquinone. Couples the redox reaction to proton translocation (for every two electrons transferred, four hydrogen ions are translocated across the cytoplasmic membrane), and thus conserves the redox energy in a proton gradient. This subunit may bind ubiquinone. This is NADH-quinone oxidoreductase subunit H from Wolinella succinogenes (strain ATCC 29543 / DSM 1740 / CCUG 13145 / JCM 31913 / LMG 7466 / NCTC 11488 / FDC 602W) (Vibrio succinogenes).